The primary structure comprises 151 residues: Globin (151 aa).

Residues 2–151 (SLSDADKKAL…AAFNETLKKA (150 aa)) enclose the Globin domain. Histidine 100 contacts heme b.

It belongs to the globin family.

The polypeptide is Globin (Biomphalaria glabrata (Bloodfluke planorb)).